The primary structure comprises 228 residues: 7-cyano-7-deazaguanine synthase (228 aa).

9 to 19 (LSGGPDSTTVL) contributes to the ATP binding site. Residues cysteine 193, cysteine 203, cysteine 206, and cysteine 209 each coordinate Zn(2+).

This sequence belongs to the QueC family. The cofactor is Zn(2+).

The enzyme catalyses 7-carboxy-7-deazaguanine + NH4(+) + ATP = 7-cyano-7-deazaguanine + ADP + phosphate + H2O + H(+). It functions in the pathway purine metabolism; 7-cyano-7-deazaguanine biosynthesis. Catalyzes the ATP-dependent conversion of 7-carboxy-7-deazaguanine (CDG) to 7-cyano-7-deazaguanine (preQ(0)). In Rickettsia rickettsii (strain Iowa), this protein is 7-cyano-7-deazaguanine synthase.